The following is a 432-amino-acid chain: MKFSYSFVQVVSLLLSLSPSVEGFTRSRNDACKPNHPFRPLPPSQPRTKTCHVVSNGHGKDDSKNIMQALHKCNNGGKVVFDANKVYTVGTALDMTFLKHIDLEVLGKIQFTNDTDYWQAHSFKHGFQNATTFFQLGGQDVNVYGGGTFDGNGQVWYDLYAEDALILRPILFGIIGLKGGTIGPLKLRYSPQWYQLVANSSDVIFDGIDISGYSSSKNEAKNTDGWDTYRSDNIVIQNSVINNGDDCVSFKPNSTNIIVQNLHCNGSHGISVGSLGQYKGEVDIVQNVLVYNISMYNASDGARIKVWPGVSSAMSEDLQGGGGLGSVKNITYNQMYIENVDWAIEVTQCYGQKNLTLCNEHPSNLTISDIHFKNFRGTTSGKRDPDVGTIVCSSPNVCSDIHAENINVKSPKGTDEFVCTNVDKSLLDVNCA.

The N-terminal stretch at 1–23 is a signal peptide; it reads MKFSYSFVQVVSLLLSLSPSVEG. Asn113, Asn129, and Asn199 each carry an N-linked (GlcNAc...) asparagine glycan. One copy of the PbH1 1 repeat lies at 231 to 252; the sequence is SDNIVIQNSVINNGDDCVSFKP. Residue Asp245 is the Proton donor of the active site. Cys247 and Cys264 are oxidised to a cystine. N-linked (GlcNAc...) asparagine glycosylation is found at Asn253 and Asn265. PbH1 repeat units follow at residues 254–274, 285–306, and 327–348; these read STNIIVQNLHCNGSHGISVGS, VQNVLVYNISMYNASDGARIKV, and VKNITYNQMYIENVDWAIEVTQ. His268 is an active-site residue. Asn292, Asn297, Asn329, Asn354, and Asn364 each carry an N-linked (GlcNAc...) asparagine glycan. The stretch at 362-394 is one PbH1 5 repeat; the sequence is PSNLTISDIHFKNFRGTTSGKRDPDVGTIVCSS. Residues Cys392 and Cys398 are joined by a disulfide bond.

This sequence belongs to the glycosyl hydrolase 28 family.

The protein resides in the secreted. It carries out the reaction [(1-&gt;4)-alpha-D-galacturonosyl](n) + H2O = alpha-D-galacturonate + [(1-&gt;4)-alpha-D-galacturonosyl](n-1). Specific in hydrolyzing the terminal glycosidic bond of polygalacturonic acid and oligogalacturonates. The sequence is that of Probable exopolygalacturonase X (pgaX) from Neosartorya fischeri (strain ATCC 1020 / DSM 3700 / CBS 544.65 / FGSC A1164 / JCM 1740 / NRRL 181 / WB 181) (Aspergillus fischerianus).